Here is a 201-residue protein sequence, read N- to C-terminus: NADH-ubiquinone oxidoreductase 21.3 kDa subunit (201 aa).

In terms of assembly, complex I is composed of about 40 different subunits.

It localises to the mitochondrion inner membrane. The enzyme catalyses a ubiquinone + NADH + 5 H(+)(in) = a ubiquinol + NAD(+) + 4 H(+)(out). Functionally, transfer of electrons from NADH to the respiratory chain. The immediate electron acceptor for the enzyme is believed to be ubiquinone. This Neurospora crassa (strain ATCC 24698 / 74-OR23-1A / CBS 708.71 / DSM 1257 / FGSC 987) protein is NADH-ubiquinone oxidoreductase 21.3 kDa subunit.